We begin with the raw amino-acid sequence, 488 residues long: Probable cytosol aminopeptidase (488 aa).

The Mn(2+) site is built by lysine 251 and aspartate 256. Residue lysine 263 is part of the active site. Residues aspartate 274, aspartate 333, and glutamate 335 each contribute to the Mn(2+) site. Arginine 337 is a catalytic residue.

Belongs to the peptidase M17 family. Requires Mn(2+) as cofactor.

The protein resides in the cytoplasm. The enzyme catalyses Release of an N-terminal amino acid, Xaa-|-Yaa-, in which Xaa is preferably Leu, but may be other amino acids including Pro although not Arg or Lys, and Yaa may be Pro. Amino acid amides and methyl esters are also readily hydrolyzed, but rates on arylamides are exceedingly low.. The catalysed reaction is Release of an N-terminal amino acid, preferentially leucine, but not glutamic or aspartic acids.. Functionally, presumably involved in the processing and regular turnover of intracellular proteins. Catalyzes the removal of unsubstituted N-terminal amino acids from various peptides. The sequence is that of Probable cytosol aminopeptidase from Cenarchaeum symbiosum (strain A).